The following is a 359-amino-acid chain: Aminomethyltransferase (359 aa).

The protein belongs to the GcvT family. In terms of assembly, the glycine cleavage system is composed of four proteins: P, T, L and H.

It carries out the reaction N(6)-[(R)-S(8)-aminomethyldihydrolipoyl]-L-lysyl-[protein] + (6S)-5,6,7,8-tetrahydrofolate = N(6)-[(R)-dihydrolipoyl]-L-lysyl-[protein] + (6R)-5,10-methylene-5,6,7,8-tetrahydrofolate + NH4(+). In terms of biological role, the glycine cleavage system catalyzes the degradation of glycine. The protein is Aminomethyltransferase of Pseudoalteromonas atlantica (strain T6c / ATCC BAA-1087).